The sequence spans 183 residues: Bifunctional protein PyrR (183 aa).

Substrate contacts are provided by residues 42-43 (TR), R87, 104-112 (DDVLYTGRT), R137, and V161. A PRPP-binding motif is present at residues 100-112 (VILVDDVLYTGRT).

Belongs to the purine/pyrimidine phosphoribosyltransferase family. PyrR subfamily.

The catalysed reaction is UMP + diphosphate = 5-phospho-alpha-D-ribose 1-diphosphate + uracil. In terms of biological role, regulates the transcription of the pyrimidine nucleotide (pyr) operon in response to exogenous pyrimidines. Its function is as follows. Also displays a weak uracil phosphoribosyltransferase activity which is not physiologically significant. This is Bifunctional protein PyrR from Deinococcus radiodurans (strain ATCC 13939 / DSM 20539 / JCM 16871 / CCUG 27074 / LMG 4051 / NBRC 15346 / NCIMB 9279 / VKM B-1422 / R1).